The primary structure comprises 713 residues: MAAAAAAVVGWLGWVLAAFCLGSTAGEAAPAPGAGLLNFCTEEDSAPGAGSLRGRAAPEATLCLRLFCSGLANSSWTWVAAEGAGCPEGGRATEPEEAAAPTGEWRALLRLRAEAGHPRSALLAVRVEPGGGAAEEAAPPWALGLGAAGLLALAAVARGLQLSALALAPAEVQVLRESGSEAERAAARRLEPARRWAGCALGALLLLASLAQAALAVLLYGAAGQRAVPAVLGCAGLVFLVGEVLPAAVSGRWALALAPRALGLSRLAVLLTLPVALPVGQLLELAARPGRLRERVLELARGGGDPYSDLSKGVLRSRTVEDVLTPLEDCFMLDSGTVLDFSVLASIMQSGHTRIPVYEEERSNIVDMLYLKDLAIVEPEDCTPLSTITRFYNHPLHFVFNDTKLDAVLEEFKRGKSHLAIVQKVNNEGEGDPFYEVLGLVTLEDVIEEIIKSEILDESEDYSDTKVRKKTVALGAPLKRKEEFSLFKVSDDEYKVKISPQLLLATQRFLSREVDVFSPLRVSEKVLLHLLKHPSVNQEVTFDESNRLAAHHYLYQRSQPVDYFILILQGRVEVEIGKEGLKFENGAFTYYGVSALTAPSSAHQSPVSSRQLIRHDVQPEPADGTRSCTYCPDYTVRALSDLQLIKVTRLQYLNALLATRAQSLPPSPENAELQAIPGSQTRLLGDKSRETAGSTNSRPSIPVEESPGRNPGV.

Residues 7-29 (AVVGWLGWVLAAFCLGSTAGEAA) traverse the membrane as a helical segment. N-linked (GlcNAc...) asparagine glycosylation occurs at Asn73. One can recognise a CNNM transmembrane domain in the interval 136-314 (EAAPPWALGL…DPYSDLSKGV (179 aa)). The next 4 membrane-spanning stretches (helical) occupy residues 137–157 (AAPP…AAVA), 199–219 (CALG…AVLL), 227–247 (AVPA…VLPA), and 267–287 (LAVL…ELAA). CBS domains lie at 324–385 (LTPL…CTPL) and 392–458 (YNHP…ILDE). Residues 664–713 (LPPSPENAELQAIPGSQTRLLGDKSRETAGSTNSRPSIPVEESPGRNPGV) are disordered. Phosphoserine is present on residues Ser667 and Ser706.

This sequence belongs to the ACDP family. Widely expressed with highest levels in brain, kidney, liver, lung and heart.

It localises to the cell membrane. Probable metal transporter. This Mus musculus (Mouse) protein is Metal transporter CNNM3 (Cnnm3).